A 134-amino-acid polypeptide reads, in one-letter code: UPF0412 protein YaaI (134 aa).

Positions methionine 1–alanine 23 are cleaved as a signal peptide.

This sequence belongs to the UPF0412 family.

In Escherichia coli O127:H6 (strain E2348/69 / EPEC), this protein is UPF0412 protein YaaI.